Here is a 57-residue protein sequence, read N- to C-terminus: UPF0391 membrane protein RPC_2356 (57 aa).

The next 2 helical transmembrane spans lie at 6–26 (WALI…TGIS) and 35–55 (ILFY…LTIF).

It belongs to the UPF0391 family.

It is found in the cell membrane. This Rhodopseudomonas palustris (strain BisB18) protein is UPF0391 membrane protein RPC_2356.